We begin with the raw amino-acid sequence, 346 residues long: LRP2-binding protein (346 aa).

The TPR repeat unit spans residues 58 to 91; that stretch reads AMAYFLRGQLYFEEGWYEEALAQFEEIQEKDHQA. 6 Sel1-like repeats span residues 92–124, 132–167, 172–205, 206–241, 242–276, and 296–331; these read IYQLGVMYYDGLGTIANAEKGVNYMRKILDSSC, FAAAYNLGRAYFEGKGVKRSDEEAERLWLLAADNGN, VKAQSILGLFYSMKEPKELEKAFFWHSEACGNGS, LESQGALGLMYFYGQGIRQDTDAALHCLREAAERGN, VYAQGTLVEYYYKMKFFTKCVSFSKRIADYDEVHD, and AMAAFYHGRCLQLGLGIMKDEESAKHYYSKACRLNP.

As to quaternary structure, interacts with LRP2.

It is found in the cytoplasm. May act as an adapter that regulates LRP2 function. The chain is LRP2-binding protein (Lrp2bp) from Mus musculus (Mouse).